Here is a 247-residue protein sequence, read N- to C-terminus: Coiled-coil domain-containing protein 124 homolog (247 aa).

Residues 1 to 146 are disordered; sequence MGGKKFGTNS…TTTTGSDDHE (146 aa). Residues 8–85 are a coiled coil; that stretch reads TNSKAEEARS…QEDKEIKERY (78 aa). The span at 11-114 shows a compositional bias: basic and acidic residues; it reads KAEEARSKKA…EQKQREKELA (104 aa). Positions 122-140 are enriched in low complexity; sequence VVVVPTTTTTTTTTTTTTT.

The protein belongs to the CCDC124 family. In terms of assembly, associates with translationally inactive ribosomes in the nonrotated state.

Functionally, ribosome-binding protein involved in ribosome hibernation: associates with translationally inactive ribosomes and stabilizes the nonrotated conformation of the 80S ribosome, thereby promoting ribosome preservation and storage. In Dictyostelium discoideum (Social amoeba), this protein is Coiled-coil domain-containing protein 124 homolog.